Here is a 214-residue protein sequence, read N- to C-terminus: MVIDKSIPKATAKRLSLYYRIFKRFHADQVEKASSKQIADAMGIDSATVRRDFSYFGELGRRGFGYDVTKLMNFFADLLNDHSTTNVILVGCGNIGRALLHYRFHDRNKMQIAMGFDTDDNALVGTKTADNIPVHGISSVKERIANTDIETAILTVPSIHAQEVTDQLIEVGIKGILSFAPVHLQVPKGVIVQSVDLTSELQTLLYFMNQNHLD.

Residues 17–56 (LYYRIFKRFHADQVEKASSKQIADAMGIDSATVRRDFSYF) constitute a DNA-binding region (H-T-H motif). An NAD(+)-binding site is contributed by 91–96 (GCGNIG).

It belongs to the transcriptional regulatory Rex family. As to quaternary structure, homodimer.

It localises to the cytoplasm. In terms of biological role, modulates transcription in response to changes in cellular NADH/NAD(+) redox state. The chain is Redox-sensing transcriptional repressor Rex from Streptococcus pyogenes serotype M12 (strain MGAS9429).